The primary structure comprises 465 residues: DEAD-box ATP-dependent RNA helicase 55 (465 aa).

The Q motif signature appears at 17 to 45 (FSELKPPLSEDIIEALDRSGFEVCTPVQA). A Helicase ATP-binding domain is found at 48 to 219 (IPFLCSHKDV…KAGLRNPYLK (172 aa)). An ATP-binding site is contributed by 61-68 (AATGSGKT). Residues 167–170 (DEAD) carry the DEAD box motif. The region spanning 228–422 (QLVHLLIENK…KDKLQQEKRG (195 aa)) is the Helicase C-terminal domain. The disordered stretch occupies residues 413 to 465 (KDKLQQEKRGKRKKSSKEAVDDSNKASRKRKLTGRQRQTIQTAQDEEEMNLRL). Over residues 428–437 (SKEAVDDSNK) the composition is skewed to basic and acidic residues. Residues 456 to 465 (QDEEEMNLRL) show a composition bias toward acidic residues.

Belongs to the DEAD box helicase family. DDX55/SPB4 subfamily.

The enzyme catalyses ATP + H2O = ADP + phosphate + H(+). This Arabidopsis thaliana (Mouse-ear cress) protein is DEAD-box ATP-dependent RNA helicase 55 (RH55).